The primary structure comprises 377 residues: Cytochrome c peroxidase, mitochondrial (377 aa).

A mitochondrion-targeting transit peptide spans 1–17 (MSFRAPNLIRSAAGRRA). The active-site Proton acceptor is the His-138. His-261 is a heme b binding site. Residue Trp-277 is the Tryptophan radical intermediate of the active site.

Belongs to the peroxidase family. Cytochrome c peroxidase subfamily. As to quaternary structure, forms a one-to-one complex with cytochrome c. It depends on heme b as a cofactor.

It is found in the mitochondrion matrix. Its subcellular location is the mitochondrion intermembrane space. It catalyses the reaction 2 Fe(II)-[cytochrome c] + H2O2 + 2 H(+) = 2 Fe(III)-[cytochrome c] + 2 H2O. Its function is as follows. Destroys radicals which are normally produced within the cells and which are toxic to biological systems. This Cryptococcus neoformans var. neoformans serotype D (strain JEC21 / ATCC MYA-565) (Filobasidiella neoformans) protein is Cytochrome c peroxidase, mitochondrial (CCP1).